Consider the following 149-residue polypeptide: Oligosaccharyltransferase complex subunit OSTC (149 aa).

Over 1–32 (METLYRVPFLVLECPNLKLKKPPWLHMPSAMT) the chain is Cytoplasmic. The helical transmembrane segment at 33-53 (VYALVVVSYFLITGGIIYDVI) threads the bilayer. Residues 54 to 83 (VEPPSVGSMTDEHGHQRPVAFLAYRVNGQY) are Extracellular-facing. The chain crosses the membrane as a helical span at residues 84–104 (IMEGLASSFLFTMGGLGFIIL). At 105–117 (DRSNAPNIPKLNR) the chain is on the cytoplasmic side. A helical transmembrane segment spans residues 118 to 138 (FLLLFIGFVCVLLSFFMARVF). Residues 139-149 (MRMKLPGYLMG) are Extracellular-facing.

The protein belongs to the OSTC family. As to quaternary structure, component of STT3A-containing oligosaccharyl transferase (OST-A) complex. STT3A-containing complex assembly occurs through the formation of 3 subcomplexes. Subcomplex 1 contains RPN1 and TMEM258, subcomplex 2 contains the STT3A-specific subunits STT3A, DC2/OSTC, and KCP2 as well as the core subunit OST4, and subcomplex 3 contains RPN2, DAD1, and OST48. The OST-A complex can form stable complexes with the Sec61 complex or with both the Sec61 and TRAP complexes. Interacts with PSEN1 and NCSTN; indicative for an association with the gamma-secretase complex.

The protein resides in the endoplasmic reticulum. The protein localises to the membrane. The protein operates within protein modification; protein glycosylation. Functionally, subunit of STT3A-containing oligosaccharyl transferase (OST-A) complex that catalyzes the initial transfer of a defined glycan (Glc(3)Man(9)GlcNAc(2) in eukaryotes) from the lipid carrier dolichol-pyrophosphate to an asparagine residue within an Asn-X-Ser/Thr consensus motif in nascent polypeptide chains, the first step in protein N-glycosylation. N-glycosylation occurs cotranslationally and the complex associates with the Sec61 complex at the channel-forming translocon complex that mediates protein translocation across the endoplasmic reticulum (ER). Within the OST-A complex, acts as an adapter that anchors the OST-A complex to the Sec61 complex. May be involved in N-glycosylation of APP (amyloid-beta precursor protein). Can modulate gamma-secretase cleavage of APP by enhancing endoprotelysis of PSEN1. The chain is Oligosaccharyltransferase complex subunit OSTC from Homo sapiens (Human).